Reading from the N-terminus, the 151-residue chain is Probable cellulase Cel12b (151 aa).

Active-site residues include Glu50 and Glu133.

It belongs to the glycosyl hydrolase 12 (cellulase H) family.

In terms of biological role, probable cellulase. Can hydrolyze barley beta-glucan in vitro. Could be important for the survival of M.tuberculosis in the environment, perhaps in amoebal hosts. The polypeptide is Probable cellulase Cel12b (Mycobacterium tuberculosis (strain ATCC 25618 / H37Rv)).